Here is a 413-residue protein sequence, read N- to C-terminus: Alpha-1-antitrypsin 1-2 (413 aa).

The signal sequence occupies residues 1-24 (MTPSISWGLLLLAGLCCMVPSFLA). 3 N-linked (GlcNAc...) asparagine glycosylation sites follow: asparagine 64, asparagine 101, and asparagine 265. An RCL region spans residues 368–387 (AATVFEAVPMSMPPILRFDH).

The protein belongs to the serpin family.

The protein resides in the secreted. In terms of biological role, inhibitor of serine proteases. Its primary target is elastase, but it also has a moderate affinity for plasmin and thrombin. The protein is Alpha-1-antitrypsin 1-2 (Serpina1b) of Mus musculus (Mouse).